Consider the following 241-residue polypeptide: MTPPFCWYYPPLQEGILCRRYQRFFAEIELTSGDRVTAHCPNTGPMTGICQVGAPVQVSYHADPKRKLAYTWEMIFVDGTWVGVNTSLPNRVIASALAAGILPELAGYGTQQREVAYGQERSRIDFYLTDHPQEPPAYVEVKNTTWAQGGLALFPDTVTSRGQKHLRELQRLRQTQPETRVCMLYFINRGDCDRFAPGDSADPTYGQLLRAAYNQGVEILPYRFAIEPRGIQFLGTAKLLL.

The protein belongs to the SfsA family.

The sequence is that of Sugar fermentation stimulation protein homolog from Thermosynechococcus vestitus (strain NIES-2133 / IAM M-273 / BP-1).